An 885-amino-acid chain; its full sequence is DNA mismatch repair protein MutS (885 aa).

Positions 1–67 (MAPGEQQLSL…SNNDDEGLPR (67 aa)) are disordered. Basic and acidic residues predominate over residues 26–36 (SEDKTEESERP). 691 to 698 (GPNASGKS) is a binding site for ATP.

It belongs to the DNA mismatch repair MutS family.

Functionally, this protein is involved in the repair of mismatches in DNA. It is possible that it carries out the mismatch recognition step. This protein has a weak ATPase activity. This is DNA mismatch repair protein MutS from Synechococcus sp. (strain RCC307).